Here is a 602-residue protein sequence, read N- to C-terminus: MQSGRQKYIRNFSIVAHIDHGKSTLADRLIEATGTLTEREMDTQVLDNMDLEKERGITIKSQAVRLIYKRNTGEEYTLNLIDTPGHVDFNYEVSRSLAACEGAILVVDATQGIQAQTLANCYLALDNDLEIVPVINKIDLPSARPEEVKQEIEDVIGIEAEDAPLVSAKTGLNIKDALEAIVNKVPAPDGDEKAPLKALIFDSYYDSYKGVVCHIRVKEGAIKEGTEIKLMNTGKVYEVVEVGVFVPNYMPVDELKAGDVGYVTASIKNVRDARVGDTITEAKRSANEALSGYRPAVPMVFSGIYPVDGAKYEELKEALEKLQVNDAALSFEPETSIALGFGFRCGFLGLLHMDIIQERLEREFNLDIITTAPSVIYKITKTDGTLIELTNPTNMPSPSEIKLMEEPIVKSSIITPSDYVGAVMDLAQNRRGIFKDMQYLDTTRVSLNYEIPLNEIIYDFFDALKSRTRGYASFDYELIGYKDADLVKLDILLNADVVDALSMIVPRERAYAKGRNMAQKLKEIIPRQMFEIPIQAAVGAKIIARETIKAMRKDVLAKCYGGDISRKRKLLEKQKEGKKRMRQVGSVEVPQEAFMAVLKTEE.

The region spanning 7–189 (KYIRNFSIVA…AIVNKVPAPD (183 aa)) is the tr-type G domain. Residues 19-24 (DHGKST) and 136-139 (NKID) each bind GTP.

Belongs to the TRAFAC class translation factor GTPase superfamily. Classic translation factor GTPase family. LepA subfamily.

The protein resides in the cell membrane. It carries out the reaction GTP + H2O = GDP + phosphate + H(+). Required for accurate and efficient protein synthesis under certain stress conditions. May act as a fidelity factor of the translation reaction, by catalyzing a one-codon backward translocation of tRNAs on improperly translocated ribosomes. Back-translocation proceeds from a post-translocation (POST) complex to a pre-translocation (PRE) complex, thus giving elongation factor G a second chance to translocate the tRNAs correctly. Binds to ribosomes in a GTP-dependent manner. The chain is Elongation factor 4 from Clostridium botulinum (strain Kyoto / Type A2).